Consider the following 131-residue polypeptide: Large ribosomal subunit protein bL19 (131 aa).

Belongs to the bacterial ribosomal protein bL19 family.

Its function is as follows. This protein is located at the 30S-50S ribosomal subunit interface and may play a role in the structure and function of the aminoacyl-tRNA binding site. In Anaeromyxobacter dehalogenans (strain 2CP-C), this protein is Large ribosomal subunit protein bL19.